A 205-amino-acid polypeptide reads, in one-letter code: Metalloproteinase inhibitor 1 (205 aa).

Positions 1–24 (MMAPFASLASGILLLLSLIASSKA) are cleaved as a signal peptide. Zn(2+) is bound at residue cysteine 25. The tract at residues 25–28 (CSCA) is involved in metalloproteinase-binding. 6 cysteine pairs are disulfide-bonded: cysteine 25/cysteine 94, cysteine 27/cysteine 123, cysteine 37/cysteine 148, cysteine 151/cysteine 197, cysteine 156/cysteine 161, and cysteine 169/cysteine 189. The 124-residue stretch at 25 to 148 (CSCAPPHPQT…AFSKTYSAGC (124 aa)) folds into the NTR domain. Asparagine 54 is a glycosylation site (N-linked (GlcNAc...) asparagine). The involved in metalloproteinase-binding stretch occupies residues 91–92 (ES). The N-linked (GlcNAc...) asparagine glycan is linked to asparagine 102. Serine 179 carries the post-translational modification Phosphoserine.

Belongs to the protease inhibitor I35 (TIMP) family. Interacts with MMP1, MMP3, MMP10 and MMP13, but has only very low affinity for MMP14. Interacts with CD63; identified in a complex with CD63 and ITGB1. In terms of processing, the activity of TIMP1 is dependent on the presence of disulfide bonds. Post-translationally, N-glycosylated. Found in fetal and adult tissues. Highest levels are found in bone. Also found in lung, ovary and uterus.

The protein localises to the secreted. Its function is as follows. Metalloproteinase inhibitor that functions by forming one to one complexes with target metalloproteinases, such as collagenases, and irreversibly inactivates them by binding to their catalytic zinc cofactor. Acts on MMP1, MMP2, MMP3, MMP7, MMP8, MMP9, MMP10, MMP11, MMP12, MMP13 and MMP16. Does not act on MMP14. Also functions as a growth factor that regulates cell differentiation, migration and cell death and activates cellular signaling cascades via CD63 and ITGB1. Plays a role in integrin signaling. The sequence is that of Metalloproteinase inhibitor 1 (Timp1) from Mus musculus (Mouse).